A 191-amino-acid polypeptide reads, in one-letter code: MEAADSATNNSKDTHFYGKSRAENRRRSDAMLLLFRALTFSFSLAAVVVMGTNRYRINPQLKVSWYDFEPYRYVLAVNAIICIYSFVETWLAVYTYLQGSYLLPEIFQVWFDYGHDQGFAYLLFSANSAGVAMAQLLQSGNTLIHGAYHCTEAGGYCTQARVSIALGFVAFLFLALSSLLTGLRVARWYLR.

The Cytoplasmic segment spans residues M1–D29. A helical transmembrane segment spans residues A30 to M50. Over G51–R72 the chain is Extracellular. A helical membrane pass occupies residues Y73–V93. Over Y94 to D116 the chain is Cytoplasmic. A helical transmembrane segment spans residues Q117 to L137. Residues Q138 to R161 lie on the Extracellular side of the membrane. Residues V162–G182 traverse the membrane as a helical segment. The Cytoplasmic portion of the chain corresponds to L183–R191.

It belongs to the Casparian strip membrane proteins (CASP) family. In terms of assembly, homodimer and heterodimers.

The protein resides in the cell membrane. This chain is CASP-like protein 4C2, found in Physcomitrium patens (Spreading-leaved earth moss).